A 358-amino-acid chain; its full sequence is MQEWFQNLFAATLGLGDLGITVGLVVSVIVKIVIILIPLILTVAYLTYFERKVIGFMQLRVGPNVTGPRGLIQPFADVFKLLFKEVTRPKLSNKALFYIGPIMSLAPSFAAWAVIPFNEEWVLTNINIGLLYILMITSLSVYGVIIAGWASNSKYSFLGAMRASAQSISYEIAMSAALVCVVMVSGSMNFSDIVAAQAKGIAGGSVFSWNWLPLFPIFIVYLISAVAETNRAPFDVAEGESEIVAGHHVEYSGFAFALFFLAEYIFMILIAALTSLMFLGGWLSPFPQSWGIVGTPSAFWMFVKMAAVLYWYLWIRATFPRYRYDQIMRLGWKVLIPIGFAYIVVLGVWMISPLNLWK.

Transmembrane regions (helical) follow at residues 20 to 40 (ITVGLVVSVIVKIVIILIPLI), 95 to 115 (ALFYIGPIMSLAPSFAAWAVI), 128 to 148 (IGLLYILMITSLSVYGVIIAG), 168 to 188 (ISYEIAMSAALVCVVMVSGSM), 206 to 226 (VFSWNWLPLFPIFIVYLISAV), 253 to 273 (GFAFALFFLAEYIFMILIAAL), 295 to 315 (TPSAFWMFVKMAAVLYWYLWI), and 334 to 354 (VLIPIGFAYIVVLGVWMISPL).

The protein belongs to the complex I subunit 1 family. As to quaternary structure, NDH-1 is composed of 14 different subunits. Subunits NuoA, H, J, K, L, M, N constitute the membrane sector of the complex.

The protein resides in the cell inner membrane. It catalyses the reaction a quinone + NADH + 5 H(+)(in) = a quinol + NAD(+) + 4 H(+)(out). Functionally, NDH-1 shuttles electrons from NADH, via FMN and iron-sulfur (Fe-S) centers, to quinones in the respiratory chain. The immediate electron acceptor for the enzyme in this species is believed to be ubiquinone. Couples the redox reaction to proton translocation (for every two electrons transferred, four hydrogen ions are translocated across the cytoplasmic membrane), and thus conserves the redox energy in a proton gradient. This subunit may bind ubiquinone. The polypeptide is NADH-quinone oxidoreductase subunit H (Neisseria gonorrhoeae (strain ATCC 700825 / FA 1090)).